The primary structure comprises 492 residues: GTPase Der (492 aa).

The 164-residue stretch at 3–166 (PVIALVGRPN…AVLGIFPKDA (164 aa)) folds into the EngA-type G 1 domain. Residues 9 to 16 (GRPNVGKS), 56 to 60 (DTGGI), and 118 to 121 (NKVD) each bind GTP. The segment at 166-190 (AGEPEEGAEAEEEVQEGQEAKRIPG) is disordered. Over residues 168–181 (EPEEGAEAEEEVQE) the composition is skewed to acidic residues. An EngA-type G 2 domain is found at 197 to 370 (IKLAIIGRPN…SVQAAFHSAV (174 aa)). Residues 203-210 (GRPNVGKS), 250-254 (DTAGV), and 315-318 (NKWD) each bind GTP. The KH-like domain occupies 371 to 455 (TRWPTSRLTQ…PIRIEYKGGE (85 aa)). Residues 453–492 (GGENPYEGNKNKLTDRQVNKKRRLMSHHKKAEKKRKDKRK) are disordered. The span at 461 to 470 (NKNKLTDRQV) shows a compositional bias: basic and acidic residues. Over residues 471–492 (NKKRRLMSHHKKAEKKRKDKRK) the composition is skewed to basic residues.

This sequence belongs to the TRAFAC class TrmE-Era-EngA-EngB-Septin-like GTPase superfamily. EngA (Der) GTPase family. Associates with the 50S ribosomal subunit.

Its function is as follows. GTPase that plays an essential role in the late steps of ribosome biogenesis. The polypeptide is GTPase Der (Ectopseudomonas mendocina (strain ymp) (Pseudomonas mendocina)).